The sequence spans 521 residues: Zinc finger protein GLIS2 (521 aa).

The interaction with CTNND1 stretch occupies residues 35-174 (ALHRELGLVD…AKQLVCRWAK (140 aa)). Disordered stretches follow at residues 41-63 (GLVDDSPAPGSPGSPPPGFLLNP) and 84-110 (SPPSGLDSPNGSSSLSPECQGNGDLPP). Residues 49–58 (PGSPGSPPPG) show a composition bias toward pro residues. The segment at 71 to 137 (GRFSAAPLVD…SSFQFFLPLG (67 aa)) is transcription activation. The span at 84 to 100 (SPPSGLDSPNGSSSLSP) shows a compositional bias: low complexity. Residues 148–171 (SFLPPPKDKCLSPELPLAKQLVCR) form a transcription repression region. Residues 168–193 (LVCRWAKCNQLFELLQDLVDHVNDHH) form a C2H2-type 1 zinc finger. The segment at 202-229 (YCCHWEGCARHGRGFNARYKMLIHIRTH) adopts a C2H2-type 2; atypical zinc-finger fold. C2H2-type zinc fingers lie at residues 235–257 (HRCPTCNKSFSRLENLKIHNRSH), 263–287 (YVCPYEGCNKRYSNSSDRFKHTRTH), and 293–317 (YYCKMPGCHKRYTDPSSLRKHIKAH). The segment at 436–501 (AGSKAEGEKG…NSAASSPEVL (66 aa)) is disordered. The segment covering 455–470 (GLEDHKTPLERTERSR) has biased composition (basic and acidic residues). A compositionally biased stretch (polar residues) spans 487–496 (DLSTGNSAAS).

The protein belongs to the GLI C2H2-type zinc-finger protein family. Interacts with CTBP1 and HDAC3. Interacts with CTNNB1 and CTNND1. Interacts with SUFU. Post-translationally, C-terminus cleavage is induced by interaction with CTNND1 and enhances by Src tyrosine kinase. Expressed at high levels in kidney, and at lower levels in heart and lung.

The protein localises to the nucleus speckle. Its subcellular location is the cytoplasm. Functionally, can act either as a transcriptional repressor or as a transcriptional activator, depending on the cell context. Acts as a repressor of the Hedgehog signaling pathway. Represses the Hedgehog-dependent expression of Wnt4. Necessary to maintain the differentiated epithelial phenotype in renal cells through the inhibition of SNAI1, which itself induces the epithelial-to-mesenchymal transition. Represses transcriptional activation by CTNNB1 in the Wnt signaling pathway. May act by recruiting the corepressors CTBP1 and HDAC3. May be involved in neuron differentiation. The protein is Zinc finger protein GLIS2 (Glis2) of Mus musculus (Mouse).